The chain runs to 923 residues: Transportin-3 (923 aa).

Met1 is modified (N-acetylmethionine). Position 74 is a phosphoserine (Ser74). Thr896 is subject to Phosphothreonine.

Interacts with (GTP-bound) Ran. Interacts with (phosphorylated) SFRS1 and SFRS2; leading to their nuclear import. Interacts with NUP62. Interacts with RBM4. Interacts with CPSF6, promoting its nuclear import. In terms of assembly, (Microbial infection) Interacts with the HIV-1 pre-integration complex (PIC), which is composed of viral genome, matrix protein, Vpr and integrase. Interacts with HIV-1 integrase protein; the interaction is direct. Expressed in skeletal muscle.

The protein resides in the nucleus envelope. The protein localises to the cytoplasm. In terms of biological role, importin, which transports target proteins into the nucleus. Specifically mediates the nuclear import of splicing factor serine/arginine (SR) proteins, such as RBM4, SFRS1 and SFRS2, by recognizing phosphorylated SR domains. Also mediates the nuclear import of serine/arginine (SR) protein CPSF6, independently of CPSF6 phosphorylation. The nuclear import process is regulated by the small GTPase Ran that partitions between cytoplasm and nucleus in the predominantly GDP- and GTP-bound form, respectively. Importin associates with target cargo proteins in the cytoplasm, and the competitive binding of GTP-bound Ran induces the release of cargos in the nucleus. Functionally, (Microbial infection) Involved in immunodeficiency virus (HIV-1) infection by importing the pre-integration complex (PIC) into the nucleus. Required for a nuclear maturation step of HIV-1 prior to integration. In Homo sapiens (Human), this protein is Transportin-3.